The primary structure comprises 417 residues: UDP-N-acetylglucosamine 1-carboxyvinyltransferase (417 aa).

Residue 22–23 coordinates phosphoenolpyruvate; sequence KN. Arg-92 is a UDP-N-acetyl-alpha-D-glucosamine binding site. Cys-116 acts as the Proton donor in catalysis. Position 116 is a 2-(S-cysteinyl)pyruvic acid O-phosphothioketal (Cys-116). UDP-N-acetyl-alpha-D-glucosamine is bound by residues Asp-304 and Ile-326.

The protein belongs to the EPSP synthase family. MurA subfamily.

The protein localises to the cytoplasm. It carries out the reaction phosphoenolpyruvate + UDP-N-acetyl-alpha-D-glucosamine = UDP-N-acetyl-3-O-(1-carboxyvinyl)-alpha-D-glucosamine + phosphate. The protein operates within cell wall biogenesis; peptidoglycan biosynthesis. Functionally, cell wall formation. Adds enolpyruvyl to UDP-N-acetylglucosamine. This chain is UDP-N-acetylglucosamine 1-carboxyvinyltransferase, found in Geotalea daltonii (strain DSM 22248 / JCM 15807 / FRC-32) (Geobacter daltonii).